Consider the following 289-residue polypeptide: Serine/threonine-protein phosphatase Pgam5, mitochondrial (289 aa).

Residues 7 to 23 form a helical membrane-spanning segment; the sequence is FACGTGAGLAAYYLQRL.

Belongs to the phosphoglycerate mutase family. BPG-dependent PGAM subfamily. As to quaternary structure, interacts with Pk92B/ASK1.

It localises to the mitochondrion outer membrane. The enzyme catalyses O-phospho-L-seryl-[protein] + H2O = L-seryl-[protein] + phosphate. The catalysed reaction is O-phospho-L-threonyl-[protein] + H2O = L-threonyl-[protein] + phosphate. Functionally, displays phosphatase activity for serine/threonine residues, and dephosphorylates and activates Pk92B kinase. Has apparently no phosphoglycerate mutase activity. The chain is Serine/threonine-protein phosphatase Pgam5, mitochondrial from Drosophila sechellia (Fruit fly).